A 381-amino-acid polypeptide reads, in one-letter code: Heme A synthase (381 aa).

Positions 1-23 are disordered; the sequence is MARRPVFQEVTETTPPGTTPSGG. The segment covering 11–23 has biased composition (low complexity); it reads TETTPPGTTPSGG. A run of 8 helical transmembrane segments spans residues 34-54, 120-140, 151-171, 185-205, 228-248, 285-305, 319-339, and 342-362; these read GAIR…IALG, RLLG…FLAT, LLLL…MVHS, LATH…YVLA, TTGL…VAGI, LVQF…VVVF, AYVA…MNVL, and SPLP…TLIL. Residue His290 participates in heme binding. Heme is bound at residue His350.

The protein belongs to the COX15/CtaA family. Type 2 subfamily. As to quaternary structure, interacts with CtaB. It depends on heme b as a cofactor.

It is found in the cell membrane. It carries out the reaction Fe(II)-heme o + 2 A + H2O = Fe(II)-heme a + 2 AH2. It functions in the pathway porphyrin-containing compound metabolism; heme A biosynthesis; heme A from heme O: step 1/1. Its function is as follows. Catalyzes the conversion of heme O to heme A by two successive hydroxylations of the methyl group at C8. The first hydroxylation forms heme I, the second hydroxylation results in an unstable dihydroxymethyl group, which spontaneously dehydrates, resulting in the formyl group of heme A. This Paracoccus denitrificans (strain Pd 1222) protein is Heme A synthase.